Reading from the N-terminus, the 591-residue chain is Putative F-box protein At1g32140 (591 aa).

Residues 2 to 49 (TMMSDLSLDLVEEILCRVPITSLKAVRSSCKLWNVLSKNRILCKTEAR) form the F-box domain. Residues 567–581 (AGRKRKEKKTKRKSK) are compositionally biased toward basic residues. The disordered stretch occupies residues 567–591 (AGRKRKEKKTKRKSKDKQMKLSNKV).

This is Putative F-box protein At1g32140 from Arabidopsis thaliana (Mouse-ear cress).